The primary structure comprises 358 residues: Gibberellin 2-beta-dioxygenase 6 (358 aa).

Positions 207–308 constitute a Fe2OG dioxygenase domain; the sequence is DETTCFLRLN…RLSVAYFLCP (102 aa). Tyr-218 is a 2-oxoglutarate binding site. Fe cation-binding residues include His-233, Asp-235, and His-289. The 2-oxoglutarate site is built by Arg-299 and Ser-301.

Belongs to the iron/ascorbate-dependent oxidoreductase family. GA2OX subfamily. L-ascorbate is required as a cofactor. Requires Fe(2+) as cofactor. Expressed in panicles. Expressed at low levels in young shoots, leaf blades and elongating internodes.

The protein resides in the cytoplasm. The protein localises to the nucleus. It catalyses the reaction gibberellin A1 + 2-oxoglutarate + O2 = gibberellin A8 + succinate + CO2. Catalyzes the 2-beta-hydroxylation of several biologically active gibberellins, leading to the homeostatic regulation of their endogenous level. Catabolism of gibberellins (GAs) plays a central role in plant development. In vitro, converts GA12 and GA53 to the corresponding 2-beta-hydroxylated products GA110 and GA97, respectively. The chain is Gibberellin 2-beta-dioxygenase 6 from Oryza sativa subsp. japonica (Rice).